A 264-amino-acid chain; its full sequence is Thymidylate synthase (264 aa).

Arg-21 lines the dUMP pocket. Residue His-51 coordinates (6R)-5,10-methylene-5,6,7,8-tetrahydrofolate. 126–127 is a binding site for dUMP; the sequence is RR. Cys-146 serves as the catalytic Nucleophile. DUMP-binding positions include 166-169, Asn-177, and 207-209; these read RSAD and HLY. Asp-169 is a (6R)-5,10-methylene-5,6,7,8-tetrahydrofolate binding site. Ala-263 provides a ligand contact to (6R)-5,10-methylene-5,6,7,8-tetrahydrofolate.

The protein belongs to the thymidylate synthase family. Bacterial-type ThyA subfamily. In terms of assembly, homodimer.

The protein resides in the cytoplasm. It carries out the reaction dUMP + (6R)-5,10-methylene-5,6,7,8-tetrahydrofolate = 7,8-dihydrofolate + dTMP. It participates in pyrimidine metabolism; dTTP biosynthesis. In terms of biological role, catalyzes the reductive methylation of 2'-deoxyuridine-5'-monophosphate (dUMP) to 2'-deoxythymidine-5'-monophosphate (dTMP) while utilizing 5,10-methylenetetrahydrofolate (mTHF) as the methyl donor and reductant in the reaction, yielding dihydrofolate (DHF) as a by-product. This enzymatic reaction provides an intracellular de novo source of dTMP, an essential precursor for DNA biosynthesis. The sequence is that of Thymidylate synthase from Aromatoleum aromaticum (strain DSM 19018 / LMG 30748 / EbN1) (Azoarcus sp. (strain EbN1)).